A 530-amino-acid chain; its full sequence is Capsid protein VP1 (530 aa).

The segment at 1 to 20 (MMMASKDATSSVDGASGAGQ) is disordered. Positions 1-225 (MMMASKDATS…FLFLVPPTVE (225 aa)) are shell domain. Residues 226-278 (QKTRPFTLPNLPLSSLSNSRAPLPISSMGISPDNVQSVQFQNGRCTLDGRLVG) form a P1 sub-domain 1 region. Positions 226 to 530 (QKTRPFTLPN…SARGRLGLRR (305 aa)) are protruding domain. The tract at residues 279–405 (TTPVSLSHVA…GSSITEATHL (127 aa)) is P2 sub-domain. Residues 406–530 (APSVYPPGFG…SARGRLGLRR (125 aa)) are P1 sub-domain 2. The segment at 523–530 (RGRLGLRR) is plays a role in binding to host histo-blood group structures antigens and in the formation of P-particles.

This sequence belongs to the caliciviridae capsid protein family. As to quaternary structure, homodimer. Homomultimer. Interacts with the minor capsid protein VP2. Interacts (via C-terminus) with host type I histo-blood group structures antigens at the surface of target cells. In terms of processing, may be cleaved by host protease to generate soluble capsid protein. Assembled capsid cannot be cleaved.

The protein resides in the virion. It localises to the host cytoplasm. Capsid protein self assembles to form an icosahedral capsid with a T=3 symmetry, about 38 nm in diameter, and consisting of 180 capsid proteins. A smaller form of capsid with a diameter of 23 nm might be capsid proteins assembled as icosahedron with T=1 symmetry. The capsid encapsulates the genomic RNA and is decorated with VP2 proteins. Attaches virion to target cells by binding histo-blood group antigens (HBGAs) present on gastroduodenal epithelial cells. Its function is as follows. The soluble capsid protein may play a role in viral immunoevasion. The protein is Capsid protein VP1 of Norovirus (strain Human/NoV/United States/Norwalk/1968/GI) (Hu/NV/NV/1968/US).